The following is an 845-amino-acid chain: Taste receptor type 1 member 3 (845 aa).

A signal peptide spans 1–18 (MAGLMLLSLMALLGLGAG). At 19-568 (APLCLSRQLR…FLAWGQPAVL (550 aa)) the chain is on the extracellular side. 2 N-linked (GlcNAc...) asparagine glycosylation sites follow: Asn128 and Asn262. Residues 569 to 589 (VLLILLALALGLVLVALGLFI) traverse the membrane as a helical segment. Topologically, residues 590 to 601 (RHRDSPLVQASG) are cytoplasmic. Residues 602–622 (GPRACFGLACLGLVCLSVLLF) traverse the membrane as a helical segment. The Extracellular portion of the chain corresponds to 623–637 (PGQPGPASCLAQQPL). A helical membrane pass occupies residues 638–658 (LHLPLTGCLSTLFLQAAQIFV). At 659–680 (GSELPSSWADQLRRCLQGPWAW) the chain is on the cytoplasmic side. Residues 681–701 (LLVLLALLAEAALCAWYLVAF) traverse the membrane as a helical segment. At 702–727 (PPEVVTDWWVLPTQVLVHCRMRSWIS) the chain is on the extracellular side. The helical transmembrane segment at 728–748 (FGLLHAINAMLAFLCFLGTFL) threads the bilayer. The Cytoplasmic portion of the chain corresponds to 749-760 (VQSRPGRYNGAR). The helical transmembrane segment at 761-781 (GLTFAMLAYFITWISFVPLFA) threads the bilayer. The Extracellular segment spans residues 782-789 (NVHVAYQP). Residues 790 to 810 (TVQMAAILLCALGILATFHLP) traverse the membrane as a helical segment. The Cytoplasmic portion of the chain corresponds to 811–845 (KCYLLLQQLELNNPEFFLGDDARGQGSSGSGGKET).

Belongs to the G-protein coupled receptor 3 family. TAS1R subfamily. As to quaternary structure, forms homodimers or heterodimers with TAS1R1 and TAS1R2.

Its subcellular location is the cell membrane. Putative taste receptor. TAS1R1/TAS1R3 responds to the umami taste stimulus (the taste of monosodium glutamate). TAS1R2/TAS1R3 recognizes diverse natural and synthetic sweeteners. TAS1R3 is essential for the recognition and response to the disaccharide trehalose. Sequence differences within and between species can significantly influence the selectivity and specificity of taste responses. The polypeptide is Taste receptor type 1 member 3 (TAS1R3) (Canis lupus familiaris (Dog)).